The sequence spans 90 residues: Small ribosomal subunit protein bS16 (90 aa).

It belongs to the bacterial ribosomal protein bS16 family.

The chain is Small ribosomal subunit protein bS16 from Shouchella clausii (strain KSM-K16) (Alkalihalobacillus clausii).